Consider the following 282-residue polypeptide: Phosphatidylserine decarboxylase proenzyme (282 aa).

Active-site charge relay system; for autoendoproteolytic cleavage activity residues include Asp-88, His-144, and Ser-247. The active-site Schiff-base intermediate with substrate; via pyruvic acid; for decarboxylase activity is Ser-247. A Pyruvic acid (Ser); by autocatalysis modification is found at Ser-247.

Belongs to the phosphatidylserine decarboxylase family. PSD-B subfamily. Prokaryotic type I sub-subfamily. As to quaternary structure, heterodimer of a large membrane-associated beta subunit and a small pyruvoyl-containing alpha subunit. Pyruvate serves as cofactor. Post-translationally, is synthesized initially as an inactive proenzyme. Formation of the active enzyme involves a self-maturation process in which the active site pyruvoyl group is generated from an internal serine residue via an autocatalytic post-translational modification. Two non-identical subunits are generated from the proenzyme in this reaction, and the pyruvate is formed at the N-terminus of the alpha chain, which is derived from the carboxyl end of the proenzyme. The autoendoproteolytic cleavage occurs by a canonical serine protease mechanism, in which the side chain hydroxyl group of the serine supplies its oxygen atom to form the C-terminus of the beta chain, while the remainder of the serine residue undergoes an oxidative deamination to produce ammonia and the pyruvoyl prosthetic group on the alpha chain. During this reaction, the Ser that is part of the protease active site of the proenzyme becomes the pyruvoyl prosthetic group, which constitutes an essential element of the active site of the mature decarboxylase.

It is found in the cell membrane. It catalyses the reaction a 1,2-diacyl-sn-glycero-3-phospho-L-serine + H(+) = a 1,2-diacyl-sn-glycero-3-phosphoethanolamine + CO2. The protein operates within phospholipid metabolism; phosphatidylethanolamine biosynthesis; phosphatidylethanolamine from CDP-diacylglycerol: step 2/2. Catalyzes the formation of phosphatidylethanolamine (PtdEtn) from phosphatidylserine (PtdSer). This chain is Phosphatidylserine decarboxylase proenzyme, found in Xanthomonas oryzae pv. oryzae (strain KACC10331 / KXO85).